A 425-amino-acid polypeptide reads, in one-letter code: Proline--tRNA ligase (425 aa).

This sequence belongs to the class-II aminoacyl-tRNA synthetase family. ProS type 2 subfamily. Homodimer.

The protein resides in the cytoplasm. The enzyme catalyses tRNA(Pro) + L-proline + ATP = L-prolyl-tRNA(Pro) + AMP + diphosphate. Catalyzes the attachment of proline to tRNA(Pro) in a two-step reaction: proline is first activated by ATP to form Pro-AMP and then transferred to the acceptor end of tRNA(Pro). The sequence is that of Proline--tRNA ligase from Anaplasma marginale (strain St. Maries).